Consider the following 702-residue polypeptide: Dissimilatory sulfite reductase MccA (702 aa).

The N-terminal stretch at 1 to 39 (MLSGWSVLKGGNMKYWDKALLSLFMCVSTLSIAATHAVA) is a signal peptide. Residues C155, C158, H159, and H171 each contribute to the heme c site. Substrate is bound by residues K220 and Y297. C314, C317, H318, C351, C354, H355, H360, C372, C375, and H376 together coordinate heme c. R378 is a binding site for substrate. C411 contributes to the Cu(+) binding site. Heme c is bound by residues H423, C430, C433, H434, H437, C474, C477, H478, H491, C496, C499, and H500. C507 is a binding site for Cu(+). Heme c contacts are provided by H528, C574, C590, H591, and H675.

It belongs to the multiheme cytochrome c family. As to quaternary structure, homotrimer. The cofactor is Cu(+). It depends on heme c as a cofactor.

It is found in the periplasm. It catalyses the reaction [protein]-disulfide + hydrogen sulfide + 2 A + 3 H2O = [protein]-dithiol + sulfite + 2 AH2 + H(+). The protein operates within sulfur metabolism; sulfite reduction. In terms of biological role, respiratory sulfite reductase that catalyzes the reduction of sulfite to sulfide in a single step, consuming six electrons in the process. Required for sulfite respiration under anaerobic growth conditions. Has only marginal activity with nitrite. This Wolinella succinogenes (strain ATCC 29543 / DSM 1740 / CCUG 13145 / JCM 31913 / LMG 7466 / NCTC 11488 / FDC 602W) (Vibrio succinogenes) protein is Dissimilatory sulfite reductase MccA.